A 218-amino-acid polypeptide reads, in one-letter code: Elongation factor Ts (218 aa).

The interval 82 to 85 is involved in Mg(2+) ion dislocation from EF-Tu; the sequence is TDFV.

This sequence belongs to the EF-Ts family.

The protein resides in the cytoplasm. Functionally, associates with the EF-Tu.GDP complex and induces the exchange of GDP to GTP. It remains bound to the aminoacyl-tRNA.EF-Tu.GTP complex up to the GTP hydrolysis stage on the ribosome. In Synechocystis sp. (strain ATCC 27184 / PCC 6803 / Kazusa), this protein is Elongation factor Ts (tsf).